A 115-amino-acid chain; its full sequence is Large ribosomal subunit protein P1 (115 aa).

The span at 56 to 73 (QAAAAPVPASGGAAAPAE) shows a compositional bias: low complexity. A disordered region spans residues 56 to 115 (QAAAAPVPASGGAAAPAEGDADEADEADEEAEEEAADDGGDDDDDEDDEASGEGLGELFG). Acidic residues predominate over residues 74-106 (GDADEADEADEEAEEEAADDGGDDDDDEDDEAS).

It belongs to the eukaryotic ribosomal protein P1/P2 family. Part of the 50S ribosomal subunit. Homodimer, it forms part of the ribosomal stalk which helps the ribosome interact with GTP-bound translation factors. Forms a heptameric uL10/P0(P1)2(P1)2(P1)2 complex, where uL10/P0 forms an elongated spine to which the P1 dimers bind in a sequential fashion.

Functionally, forms part of the ribosomal stalk, playing a central role in the interaction of the ribosome with GTP-bound translation factors. The sequence is that of Large ribosomal subunit protein P1 from Haloarcula marismortui (strain ATCC 43049 / DSM 3752 / JCM 8966 / VKM B-1809) (Halobacterium marismortui).